We begin with the raw amino-acid sequence, 225 residues long: 7-cyano-7-deazaguanine synthase (225 aa).

Residue 10-20 (LSGGIDSATAA) participates in ATP binding. The Zn(2+) site is built by Cys191, Cys199, Cys202, and Cys205.

The protein belongs to the QueC family. The cofactor is Zn(2+).

The catalysed reaction is 7-carboxy-7-deazaguanine + NH4(+) + ATP = 7-cyano-7-deazaguanine + ADP + phosphate + H2O + H(+). Its pathway is purine metabolism; 7-cyano-7-deazaguanine biosynthesis. Catalyzes the ATP-dependent conversion of 7-carboxy-7-deazaguanine (CDG) to 7-cyano-7-deazaguanine (preQ(0)). This Prochlorococcus marinus (strain NATL1A) protein is 7-cyano-7-deazaguanine synthase.